Reading from the N-terminus, the 110-residue chain is Putative anti-sigma factor antagonist TM_1442 (110 aa).

Residues 4 to 110 (LKLDIVEQDD…FKITDTVEEA (107 aa)) enclose the STAS domain. A Phosphoserine modification is found at Ser-59.

The protein belongs to the anti-sigma-factor antagonist family. Post-translationally, phosphorylated on a serine residue.

In terms of biological role, in the phosphorylated form it could act as an anti-anti-sigma factor that counteracts an anti-sigma factor and thus releases a sigma factor from inhibition. The protein is Putative anti-sigma factor antagonist TM_1442 of Thermotoga maritima (strain ATCC 43589 / DSM 3109 / JCM 10099 / NBRC 100826 / MSB8).